A 400-amino-acid polypeptide reads, in one-letter code: MERWPWPSGGAWLLVAARALLQLLRSDLRLGRPLLAALALLAALDWLCQRLLPPPAALVVLAGAGWIALSRLARPPRLPVATRAVLITGCDTGFGKETAKKLDAMGFTVLATVLDLNGPGALELRARCSPRLKLLQMDLTKPEDISRVLEITKAHTASTGLWGLVNNAGLNMVVADVELSPVVTFRECMEVNFFGALELTKGLLPLLRHSRGRIVTVGSPAGDMPYPCLAAYGTSKAAIALLMDTFSCELLPWGIKVSIIQPGCFKTEAVTNVNLWEKRKQLLLANLPRELLQAYGEDYIEHLHGQFLNSLRMALPDLSPVVDAIIDALLAAQPRSRYYTGRGLGLMYFIHHYLPGGLRRRFLQNFFISHLLPRALRPGQPGPVHDTTQDPNPSPTVSAL.

82–111 (TRAVLITGCDTGFGKETAKKLDAMGFTVLA) is an NAD(+) binding site. Ser219 provides a ligand contact to substrate. Tyr232 acts as the Proton acceptor in catalysis. Residues 378–400 (PGQPGPVHDTTQDPNPSPTVSAL) form a disordered region. The span at 389–400 (QDPNPSPTVSAL) shows a compositional bias: polar residues.

This sequence belongs to the short-chain dehydrogenases/reductases (SDR) family. As to quaternary structure, interacts with ligand-free cytoplasmic NR3C2. In terms of tissue distribution, highly expressed in kidney, adrenal gland and distal colon, and at much lower levels in lung, hypothalamus, hippocampus, and midbrain.

The protein localises to the microsome. The protein resides in the endoplasmic reticulum. It carries out the reaction an 11beta-hydroxysteroid + NAD(+) = an 11-oxosteroid + NADH + H(+). The catalysed reaction is corticosterone + NAD(+) = 11-dehydrocorticosterone + NADH + H(+). It catalyses the reaction 11beta,17beta-dihydroxyandrost-4-ene-3-one + NAD(+) = 17beta-hydroxyandrost-4-ene-3,11-dione + NADH + H(+). The enzyme catalyses 11beta-hydroxyandrost-4-ene-3,17-dione + NAD(+) = androst-4-ene-3,11,17-trione + NADH + H(+). It functions in the pathway steroid metabolism. With respect to regulation, inhibited by glycyrrhetinic acid. Induced by progesterone, through the Ihh signaling pathway. Catalyzes the conversion of biologically active 11beta-hydroxyglucocorticoids (11beta-hydroxysteroid) such as corticosterone, to inactive 11-ketoglucocorticoids (11-oxosteroid) such as 11-dehydrocorticosterone, in the presence of NAD(+). Functions as a dehydrogenase (oxidase), thereby decreasing the concentration of active glucocorticoids, thus protecting the nonselective mineralocorticoid receptor from occupation by glucocorticoids. Plays an important role in maintaining glucocorticoids balance during preimplantation and protects the fetus from excessive maternal corticosterone exposure. Catalyzes the oxidation of 11beta-hydroxytestosterone (11beta,17beta-dihydroxyandrost-4-ene-3-one) to 11-ketotestosterone (17beta-hydroxyandrost-4-ene-3,11-dione), a major bioactive androgen. Catalyzes the conversion of 11beta-hydroxyandrostenedione (11beta-hydroxyandrost-4-ene-3,17-dione) to 11-ketoandrostenedione (androst-4-ene-3,11,17-trione), which can be further metabolized to 11-ketotestosterone. Converts 7-beta-25-dihydroxycholesterol to 7-oxo-25-hydroxycholesterol in vitro. 7-beta-25-dihydroxycholesterol (not 7-oxo-25-hydroxycholesterol) acts as a ligand for the G-protein-coupled receptor (GPCR) Epstein-Barr virus-induced gene 2 (EBI2) and may thereby regulate immune cell migration. The sequence is that of 11-beta-hydroxysteroid dehydrogenase type 2 (Hsd11b2) from Rattus norvegicus (Rat).